Here is a 220-residue protein sequence, read N- to C-terminus: Lipoprotein-releasing system ATP-binding protein LolD (220 aa).

The ABC transporter domain maps to 1–220; that stretch reads MRAVDIHKSY…YRMKDGQWQS (220 aa). Position 37–44 (37–44) interacts with ATP; sequence GASGAGKS.

The protein belongs to the ABC transporter superfamily. Lipoprotein translocase (TC 3.A.1.125) family. In terms of assembly, the complex is composed of two ATP-binding proteins (LolD) and two transmembrane proteins (LolC and LolE).

It is found in the cell inner membrane. Its function is as follows. Part of the ABC transporter complex LolCDE involved in the translocation of mature outer membrane-directed lipoproteins, from the inner membrane to the periplasmic chaperone, LolA. Responsible for the formation of the LolA-lipoprotein complex in an ATP-dependent manner. The polypeptide is Lipoprotein-releasing system ATP-binding protein LolD (Bdellovibrio bacteriovorus (strain ATCC 15356 / DSM 50701 / NCIMB 9529 / HD100)).